A 143-amino-acid polypeptide reads, in one-letter code: NADH-quinone oxidoreductase subunit A (143 aa).

Helical transmembrane passes span 8–28, 63–83, and 93–113; these read FGNVFVFFLLGVVFVAGGYLT, FYVVALIFIIFDVEVVFLFPW, and FALVEALVFAGILILGLVYAW.

This sequence belongs to the complex I subunit 3 family. In terms of assembly, NDH-1 is composed of 14 different subunits. Subunits NuoA, H, J, K, L, M, N constitute the membrane sector of the complex.

Its subcellular location is the cell inner membrane. The enzyme catalyses a quinone + NADH + 5 H(+)(in) = a quinol + NAD(+) + 4 H(+)(out). In terms of biological role, NDH-1 shuttles electrons from NADH, via FMN and iron-sulfur (Fe-S) centers, to quinones in the respiratory chain. The immediate electron acceptor for the enzyme in this species is believed to be a menaquinone. Couples the redox reaction to proton translocation (for every two electrons transferred, four hydrogen ions are translocated across the cytoplasmic membrane), and thus conserves the redox energy in a proton gradient. The chain is NADH-quinone oxidoreductase subunit A from Chlorobium phaeovibrioides (strain DSM 265 / 1930) (Prosthecochloris vibrioformis (strain DSM 265)).